A 660-amino-acid chain; its full sequence is UvrABC system protein B (660 aa).

A Helicase ATP-binding domain is found at 26 to 414 (KKVLAGQRHQ…PEMTEQIIRP (389 aa)). Residue 39-46 (GATGTGKT) coordinates ATP. The short motif at 92-115 (YYDYYQPEAYVPSTDTFIEKDASI) is the Beta-hairpin element. A Helicase C-terminal domain is found at 430–596 (QIDNLIEEIR…TIRKEVRDVI (167 aa)). In terms of domain architecture, UVR spans 624-659 (EKVIEQMENEMKQAAKDLDFEKAAELRDVILELKAE).

This sequence belongs to the UvrB family. As to quaternary structure, forms a heterotetramer with UvrA during the search for lesions. Interacts with UvrC in an incision complex.

Its subcellular location is the cytoplasm. Its function is as follows. The UvrABC repair system catalyzes the recognition and processing of DNA lesions. A damage recognition complex composed of 2 UvrA and 2 UvrB subunits scans DNA for abnormalities. Upon binding of the UvrA(2)B(2) complex to a putative damaged site, the DNA wraps around one UvrB monomer. DNA wrap is dependent on ATP binding by UvrB and probably causes local melting of the DNA helix, facilitating insertion of UvrB beta-hairpin between the DNA strands. Then UvrB probes one DNA strand for the presence of a lesion. If a lesion is found the UvrA subunits dissociate and the UvrB-DNA preincision complex is formed. This complex is subsequently bound by UvrC and the second UvrB is released. If no lesion is found, the DNA wraps around the other UvrB subunit that will check the other stand for damage. The chain is UvrABC system protein B from Oceanobacillus iheyensis (strain DSM 14371 / CIP 107618 / JCM 11309 / KCTC 3954 / HTE831).